The following is a 383-amino-acid chain: LIM/homeobox protein Lhx3 (383 aa).

LIM zinc-binding domains follow at residues 14–73 (PLCA…RFGT) and 73–136 (TKCA…AKQR). Threonine 48 is subject to Phosphothreonine. Serine 56 is modified (phosphoserine). Residues 142-201 (AKRPRTTITAKQLETLKSAYNTSPKPARHVREQLSSETGLDMRVVQVWFQNRRAKEKRLK) constitute a DNA-binding region (homeobox). The tract at residues 197–383 (EKRLKKDAGR…WLDEVDHAQF (187 aa)) is disordered. At tyrosine 212 the chain carries Phosphotyrosine. Serine 223 carries the post-translational modification Phosphoserine. A compositionally biased stretch (low complexity) spans 307-334 (PAALQSLPGPQPLLSSLVYPEAGLGLVP). Residues 335 to 344 (AGPPGGPPPM) are compositionally biased toward pro residues.

Interacts with POU1F1. At neuronal promoters, interacts with LDB1, in motor neurons LDB1 is displaced by ISL1 and a ternary complex is formed in which ISL1 contacts both LHX3 and LDB1; allosteric structural changes in the DNA binding domain of LHX3, induced by the ISL1-LHX3 interaction, may explain differences in sequence specificity of the different complexes. Interacts with LDB2. May interact with CITED2/MRG1.

It localises to the nucleus. Transcription factor. Recognizes and binds to the consensus sequence motif 5'-AATTAATTA-3' in the regulatory elements of target genes, such as glycoprotein hormones alpha chain CGA and visual system homeobox CHX10, positively modulating transcription; transcription can be co-activated by LDB2. Synergistically enhances transcription from the prolactin promoter in cooperation with POU1F1/Pit-1. Required for the establishment of the specialized cells of the pituitary gland and the nervous system. Involved in the development of interneurons and motor neurons in cooperation with LDB1 and ISL1. This Sus scrofa (Pig) protein is LIM/homeobox protein Lhx3 (LHX3).